A 689-amino-acid chain; its full sequence is Elongation factor G (689 aa).

A tr-type G domain is found at 9–283 (AKFRNIGIMA…AIIEFMPSPL (275 aa)). GTP is bound by residues 18–25 (AHIDAGKT), 82–86 (DTPGH), and 136–139 (NKMD).

It belongs to the TRAFAC class translation factor GTPase superfamily. Classic translation factor GTPase family. EF-G/EF-2 subfamily.

It localises to the cytoplasm. In terms of biological role, catalyzes the GTP-dependent ribosomal translocation step during translation elongation. During this step, the ribosome changes from the pre-translocational (PRE) to the post-translocational (POST) state as the newly formed A-site-bound peptidyl-tRNA and P-site-bound deacylated tRNA move to the P and E sites, respectively. Catalyzes the coordinated movement of the two tRNA molecules, the mRNA and conformational changes in the ribosome. The protein is Elongation factor G of Clostridium botulinum (strain ATCC 19397 / Type A).